A 568-amino-acid polypeptide reads, in one-letter code: Dihydroxy-acid dehydratase 1 (568 aa).

Positions 1 to 22 are disordered; that stretch reads MAEQTNTPDLKPRSRDVTDGLE. A compositionally biased stretch (basic and acidic residues) spans 10-22; sequence LKPRSRDVTDGLE. C57 provides a ligand contact to [2Fe-2S] cluster. D89 is a Mg(2+) binding site. Residue C130 coordinates [2Fe-2S] cluster. The Mg(2+) site is built by D131 and K132. Position 132 is an N6-carboxylysine (K132). Residue C207 participates in [2Fe-2S] cluster binding. E458 contributes to the Mg(2+) binding site. Catalysis depends on S484, which acts as the Proton acceptor.

It belongs to the IlvD/Edd family. Homodimer. [2Fe-2S] cluster is required as a cofactor. Requires Mg(2+) as cofactor.

The enzyme catalyses (2R)-2,3-dihydroxy-3-methylbutanoate = 3-methyl-2-oxobutanoate + H2O. The catalysed reaction is (2R,3R)-2,3-dihydroxy-3-methylpentanoate = (S)-3-methyl-2-oxopentanoate + H2O. It functions in the pathway amino-acid biosynthesis; L-isoleucine biosynthesis; L-isoleucine from 2-oxobutanoate: step 3/4. Its pathway is amino-acid biosynthesis; L-valine biosynthesis; L-valine from pyruvate: step 3/4. In terms of biological role, functions in the biosynthesis of branched-chain amino acids. Catalyzes the dehydration of (2R,3R)-2,3-dihydroxy-3-methylpentanoate (2,3-dihydroxy-3-methylvalerate) into 2-oxo-3-methylpentanoate (2-oxo-3-methylvalerate) and of (2R)-2,3-dihydroxy-3-methylbutanoate (2,3-dihydroxyisovalerate) into 2-oxo-3-methylbutanoate (2-oxoisovalerate), the penultimate precursor to L-isoleucine and L-valine, respectively. This is Dihydroxy-acid dehydratase 1 from Nocardia farcinica (strain IFM 10152).